The primary structure comprises 316 residues: Acetyl-coenzyme A carboxylase carboxyl transferase subunit alpha (316 aa).

In terms of domain architecture, CoA carboxyltransferase C-terminal spans 39–293 (RLQDKSKALT…RGELLTQLKM (255 aa)).

This sequence belongs to the AccA family. Acetyl-CoA carboxylase is a heterohexamer composed of biotin carboxyl carrier protein (AccB), biotin carboxylase (AccC) and two subunits each of ACCase subunit alpha (AccA) and ACCase subunit beta (AccD).

Its subcellular location is the cytoplasm. It catalyses the reaction N(6)-carboxybiotinyl-L-lysyl-[protein] + acetyl-CoA = N(6)-biotinyl-L-lysyl-[protein] + malonyl-CoA. The protein operates within lipid metabolism; malonyl-CoA biosynthesis; malonyl-CoA from acetyl-CoA: step 1/1. Component of the acetyl coenzyme A carboxylase (ACC) complex. First, biotin carboxylase catalyzes the carboxylation of biotin on its carrier protein (BCCP) and then the CO(2) group is transferred by the carboxyltransferase to acetyl-CoA to form malonyl-CoA. The polypeptide is Acetyl-coenzyme A carboxylase carboxyl transferase subunit alpha (Pseudomonas aeruginosa (strain LESB58)).